The sequence spans 217 residues: Ependymin (217 aa).

The signal sequence occupies residues 1 to 20 (MHTVKLLCVVFSCLCAIGWA). N-linked (GlcNAc...) asparagine glycosylation is found at Asn73 and Asn96.

It belongs to the ependymin family. Forms disulfide-linked dimers. In terms of processing, binds calcium through the terminal sialic acids. In terms of tissue distribution, EPDs are synthesized in the meninx and secreted in the cerebrospinal fluid.

It is found in the secreted. In terms of biological role, may play a role in neural plasticity. May be involved during axon regeneration. The protein is Ependymin (epd) of Danio rerio (Zebrafish).